The sequence spans 175 residues: Translation initiation factor IF-3 (175 aa).

It belongs to the IF-3 family. In terms of assembly, monomer.

It is found in the cytoplasm. Functionally, IF-3 binds to the 30S ribosomal subunit and shifts the equilibrium between 70S ribosomes and their 50S and 30S subunits in favor of the free subunits, thus enhancing the availability of 30S subunits on which protein synthesis initiation begins. The chain is Translation initiation factor IF-3 from Staphylococcus epidermidis (strain ATCC 35984 / DSM 28319 / BCRC 17069 / CCUG 31568 / BM 3577 / RP62A).